Consider the following 206-residue polypeptide: FMN-dependent NADH:quinone oxidoreductase (206 aa).

FMN is bound by residues serine 10 and 15–17 (SVS).

This sequence belongs to the azoreductase type 1 family. Homodimer. FMN serves as cofactor.

The catalysed reaction is 2 a quinone + NADH + H(+) = 2 a 1,4-benzosemiquinone + NAD(+). It catalyses the reaction N,N-dimethyl-1,4-phenylenediamine + anthranilate + 2 NAD(+) = 2-(4-dimethylaminophenyl)diazenylbenzoate + 2 NADH + 2 H(+). Its function is as follows. Quinone reductase that provides resistance to thiol-specific stress caused by electrophilic quinones. Also exhibits azoreductase activity. Catalyzes the reductive cleavage of the azo bond in aromatic azo compounds to the corresponding amines. This is FMN-dependent NADH:quinone oxidoreductase from Acidobacterium capsulatum (strain ATCC 51196 / DSM 11244 / BCRC 80197 / JCM 7670 / NBRC 15755 / NCIMB 13165 / 161).